The chain runs to 460 residues: MRILFVSAEATPLAKVGGMADVVGALPKVLRKMGHDVRIFMPYYGFLGDKMEVPEEPIWEGTAMYQNFKIYETVLPKSDVPLYLFGHPAFWPRHIYYGDDEDWRFTLFANGAAEFCWNGWKPEIVHCNDWHTGMIPVWMHETPDIKTVFTIHNLAYQGPWRWYLERITWCPWYMEGHNTMAAAVQFADRVTTVSPTYASQIQTPAYGENLDGLMSFITGKLHGILNGIDMNFYNPANDRYIPQTYDVNTLEKRVDNKIALQEEVGFEVNKNSFLMGMVSRLVEQKGLDLMLQVLDRFMAYTDTQFILLGTGDRFYETQMWQIASRYPGRMSVQLLHNDALSRRIYAGTDAFLMPSRFEPCGISQLLAMRYGSIPIVRRTGGLVDTVSFYDPINNVGTGYSFDRYEPLDLLTAMVRAYEGFRFKDQWQELQKRGMRENFSWDKSAQGYIKMYKSMLGLPEE.

Residue lysine 15 participates in ADP-alpha-D-glucose binding.

It belongs to the glycosyltransferase 1 family. Bacterial/plant glycogen synthase subfamily.

The enzyme catalyses [(1-&gt;4)-alpha-D-glucosyl](n) + ADP-alpha-D-glucose = [(1-&gt;4)-alpha-D-glucosyl](n+1) + ADP + H(+). It functions in the pathway glycan biosynthesis; glycogen biosynthesis. Its function is as follows. Synthesizes alpha-1,4-glucan chains using ADP-glucose. The polypeptide is Glycogen synthase (Trichodesmium erythraeum (strain IMS101)).